The sequence spans 79 residues: D-alanyl carrier protein (79 aa).

The Carrier domain occupies 2 to 79 (AEFKEQVLDI…MVIKKLEEIR (78 aa)). At serine 37 the chain carries O-(pantetheine 4'-phosphoryl)serine.

This sequence belongs to the DltC family. In terms of processing, 4'-phosphopantetheine is transferred from CoA to a specific serine of apo-DCP.

The protein localises to the cytoplasm. Its pathway is cell wall biogenesis; lipoteichoic acid biosynthesis. Functionally, carrier protein involved in the D-alanylation of lipoteichoic acid (LTA). The loading of thioester-linked D-alanine onto DltC is catalyzed by D-alanine--D-alanyl carrier protein ligase DltA. The DltC-carried D-alanyl group is further transferred to cell membrane phosphatidylglycerol (PG) by forming an ester bond, probably catalyzed by DltD. D-alanylation of LTA plays an important role in modulating the properties of the cell wall in Gram-positive bacteria, influencing the net charge of the cell wall. The polypeptide is D-alanyl carrier protein (Bacillus mycoides (strain KBAB4) (Bacillus weihenstephanensis)).